Here is a 367-residue protein sequence, read N- to C-terminus: MASSSTAYYLKDAGFHIRNIPKAWNDWNLFHVFQNFGKVSYCRVVGQSNDGQVQLGFVNMMSVADADEVRKNLNDGNLIGENFTLKVTDHKNVGGSLLPMASNSVQKLVSSPPSKSGPVLLSSSWLPLNKDIEVEVVDYLPSSSVAPDLFALTLLRINDSSMKEKYDSMHEKMNAYAQIVPFDSELEIGYDGVFRDAPRSVRRVRRISATKLYLVDFGKIINYEKAKCFQLPKVFQSMPTRVSLCGLDGLTWSPVAIPSFDNIREVVKKWGQMENSTLHAMACGFQGSINMINLFCGKSILADRLQRKGVCEYLPRSQQPHYAYSRETLLQHNNSGVTAQISNDADVVKDLLKKIDGVKNMLRELEL.

The 80-residue stretch at 13–92 (AGFHIRNIPK…FTLKVTDHKN (80 aa)) folds into the RRM domain. Residues 298-345 (KSILADRLQRKGVCEYLPRSQQPHYAYSRETLLQHNNSGVTAQISNDA) are required for ife-3 interaction.

Component of the pid-1 variant of the PETISCO complex (also called the pid-3, erh-2, tofu-6, and ife-3 small RNA complex) containing at least pid-1, tofu-6, ife-3, pid-3, and erh-2, which is required for the biogenesis of 21 nucleotide PIWI-interacting RNAs (piRNAs) that possess a uracil residue at the 5'-end (also called 21U-RNAs). Within the pid-1 variant of the PETISCO complex interacts with pid-1. Component of the tost-1 variant of the PETISCO complex (also called the pid-3, erh-2, tofu-6, and ife-3 small RNA complex) containing at least tost-1, tofu-6, ife-3, pid-3, and erh-2, which plays an essential role in embryogenesis. Within the tost-1 variant of the PETISCO complex interacts with tost-1. Within the pid-1 and tost-1 variants of the PETISCO complexes interacts (via C-terminus) with ife-3. Within the pid-1 and tost-1 variants of the PETISCO complexes interacts (via the RRM domain) with pid-3. Within the pid-1 and tost-1 variants of the PETISCO complexes interacts (via the RRM domain) with erh-2. In contrast to the pid-1 variant of the PETISCO complex, the tost-1 variant of the PETISCO complex plays a minor role in the biogenesis of 21U-RNAs. Interacts (via residues 120-314) with the PUCH complex subunit tofu-1 (via residues 82-172); the interaction between the PETISCO and PUCH complex members enhances piRNA production in vivo. Expression is restricted to the germline (at protein level).

It localises to the cytoplasm. The protein resides in the perinuclear region. Its subcellular location is the nucleus. Functionally, component of the pid-1 and tost-1 variants of the PETISCO complexes, which have roles in the biogenesis of a class of 21 nucleotide PIWI-interacting RNAs (piRNAs) that possess a uracil residue at the 5'-end (also called 21U-RNAs) and embryogenesis, respectively. Promotes the biogenesis of 21U-RNAs. Mediates the interaction between the PETISCO complex and the PUCH complex, the endoribonuclease complex processing the 5'-end of precursor piRNAs, thereby enhancing mature piRNA production. Required for chromosome segregation and cell division in early embryos. May have a role in DNA replication. This chain is Embryonic developmental protein tofu-6, found in Caenorhabditis elegans.